The primary structure comprises 550 residues: Chaperonin GroEL (550 aa).

Residues 30–33 (TLGP), K51, 87–91 (DGTTT), G415, 479–481 (NAA), and D495 each bind ATP.

This sequence belongs to the chaperonin (HSP60) family. As to quaternary structure, forms a cylinder of 14 subunits composed of two heptameric rings stacked back-to-back. Interacts with the co-chaperonin GroES.

It localises to the cytoplasm. The enzyme catalyses ATP + H2O + a folded polypeptide = ADP + phosphate + an unfolded polypeptide.. Functionally, together with its co-chaperonin GroES, plays an essential role in assisting protein folding. The GroEL-GroES system forms a nano-cage that allows encapsulation of the non-native substrate proteins and provides a physical environment optimized to promote and accelerate protein folding. The sequence is that of Chaperonin GroEL from Burkholderia mallei (strain NCTC 10247).